A 23-amino-acid polypeptide reads, in one-letter code: Magainin-R1 (23 aa).

As to expression, expressed by the skin glands.

The protein localises to the secreted. Functionally, antimicrobial peptide. This is Magainin-R1 from Xenopus ruwenzoriensis (Uganda clawed frog).